Consider the following 280-residue polypeptide: Large ribosomal subunit protein uL2 (280 aa).

Residues 226-280 (NPIDHPHGGGEGRTSGGRHPVTPWGKPTKGAKTRNKKKASSQLIIRSRHAKKKGR) are disordered. Composition is skewed to basic residues over residues 254-264 (KGAKTRNKKKA) and 271-280 (RSRHAKKKGR).

It belongs to the universal ribosomal protein uL2 family. Part of the 50S ribosomal subunit. Forms a bridge to the 30S subunit in the 70S ribosome.

Functionally, one of the primary rRNA binding proteins. Required for association of the 30S and 50S subunits to form the 70S ribosome, for tRNA binding and peptide bond formation. It has been suggested to have peptidyltransferase activity; this is somewhat controversial. Makes several contacts with the 16S rRNA in the 70S ribosome. The polypeptide is Large ribosomal subunit protein uL2 (Roseobacter denitrificans (strain ATCC 33942 / OCh 114) (Erythrobacter sp. (strain OCh 114))).